The following is a 182-amino-acid chain: Putative manganese efflux pump MntP 2 (182 aa).

Helical transmembrane passes span 2–22 (IELT…SIAL), 37–57 (AGGF…YLGV), 63–83 (IGGI…LKMI), 104–123 (LLLL…LTLT), 127–149 (LPLW…GGVH), and 162–182 (AEYL…IEHS).

This sequence belongs to the MntP (TC 9.B.29) family.

It localises to the cell inner membrane. Functionally, probably functions as a manganese efflux pump. This is Putative manganese efflux pump MntP 2 from Wolinella succinogenes (strain ATCC 29543 / DSM 1740 / CCUG 13145 / JCM 31913 / LMG 7466 / NCTC 11488 / FDC 602W) (Vibrio succinogenes).